A 355-amino-acid polypeptide reads, in one-letter code: IGF-like family receptor 1 (355 aa).

The first 22 residues, 1 to 22 (MGPGRCLLTALLLLALAPPPEA), serve as a signal peptide directing secretion. The Extracellular portion of the chain corresponds to 23-163 (SQYCGRLEYW…PQQAWPNFLP (141 aa)). The interval 120-147 (KGHCPLTPGNPGAPSSQERSSPASSIAW) is disordered. The span at 132 to 144 (APSSQERSSPASS) shows a compositional bias: low complexity. A helical membrane pass occupies residues 164 to 184 (LVVLVLLLTLAVIAILLFILL). Residues 185–355 (WHLCWPKEKA…KLGSSGVCWA (171 aa)) are Cytoplasmic-facing.

The protein localises to the cell membrane. Functionally, probable cell membrane receptor for the IGF-like family proteins. Binds IGFL1 and IGFL3 with a higher affinity. May also bind IGFL2. The protein is IGF-like family receptor 1 (IGFLR1) of Homo sapiens (Human).